We begin with the raw amino-acid sequence, 189 residues long: GTP cyclohydrolase 1 (189 aa).

Positions 78, 81, and 150 each coordinate Zn(2+).

This sequence belongs to the GTP cyclohydrolase I family. Toroid-shaped homodecamer, composed of two pentamers of five dimers.

It carries out the reaction GTP + H2O = 7,8-dihydroneopterin 3'-triphosphate + formate + H(+). It participates in cofactor biosynthesis; 7,8-dihydroneopterin triphosphate biosynthesis; 7,8-dihydroneopterin triphosphate from GTP: step 1/1. The sequence is that of GTP cyclohydrolase 1 from Listeria monocytogenes serovar 1/2a (strain ATCC BAA-679 / EGD-e).